A 141-amino-acid polypeptide reads, in one-letter code: Large ribosomal subunit protein uL11 (141 aa).

Belongs to the universal ribosomal protein uL11 family. Part of the ribosomal stalk of the 50S ribosomal subunit. Interacts with L10 and the large rRNA to form the base of the stalk. L10 forms an elongated spine to which L12 dimers bind in a sequential fashion forming a multimeric L10(L12)X complex. One or more lysine residues are methylated.

In terms of biological role, forms part of the ribosomal stalk which helps the ribosome interact with GTP-bound translation factors. The protein is Large ribosomal subunit protein uL11 of Streptococcus pneumoniae (strain Hungary19A-6).